Consider the following 165-residue polypeptide: Protein SprT (165 aa).

Residues 20–163 (EKLAQANLKL…RCVHCGEQLV (144 aa)) enclose the SprT-like domain. Residue His78 participates in Zn(2+) binding. Glu79 is a catalytic residue. His82 provides a ligand contact to Zn(2+).

This sequence belongs to the SprT family. The cofactor is Zn(2+).

It is found in the cytoplasm. The chain is Protein SprT from Shigella flexneri serotype 5b (strain 8401).